The sequence spans 199 residues: Large ribosomal subunit protein bL25 (199 aa).

The protein belongs to the bacterial ribosomal protein bL25 family. CTC subfamily. In terms of assembly, part of the 50S ribosomal subunit; part of the 5S rRNA/L5/L18/L25 subcomplex. Contacts the 5S rRNA. Binds to the 5S rRNA independently of L5 and L18.

This is one of the proteins that binds to the 5S RNA in the ribosome where it forms part of the central protuberance. The sequence is that of Large ribosomal subunit protein bL25 from Nostoc punctiforme (strain ATCC 29133 / PCC 73102).